The following is a 327-amino-acid chain: Olfactory receptor 6A2 (327 aa).

At 1 to 26 (MEWRNHSGRVSEFVLLGFPAPAPLQV) the chain is on the extracellular side. N5 carries N-linked (GlcNAc...) asparagine glycosylation. A helical membrane pass occupies residues 27 to 47 (LLFALLLLAYVLVLTENTLII). At 48-55 (MAIRNHST) the chain is on the cytoplasmic side. Residues 56–76 (LHKPMYFFLANMSFLEIWYVT) form a helical membrane-spanning segment. The Extracellular portion of the chain corresponds to 77-104 (VTIPKMLAGFVGSKQDHGQLISFEGCMT). Cysteines 102 and 194 form a disulfide. Residues 105 to 125 (QLYFFLGLGCTECVLLAVMAY) traverse the membrane as a helical segment. Residues 126–144 (DRYMAICYPLHYPVIVSGR) are Cytoplasmic-facing. Residues 145–165 (LCVQMAAGSWAGGFGISMVKV) traverse the membrane as a helical segment. Residues 166 to 201 (FLISGLSYCGPNIINHFFCDVSPLLNLSCTDMSTAE) lie on the Extracellular side of the membrane. An N-linked (GlcNAc...) asparagine glycan is attached at N191. The helical transmembrane segment at 202-222 (LTDFILAIFILLGPLSVTGAS) threads the bilayer. Topologically, residues 223–242 (YVAITGAVMHIPSAAGRYKA) are cytoplasmic. A helical transmembrane segment spans residues 243–263 (FSTCASHLTVVIIFYAASIFI). At 264–276 (YARPKALSAFDTN) the chain is on the extracellular side. A helical transmembrane segment spans residues 277–297 (KLVSVLYAVIVPLLNPIIYCL). At 298–327 (RNQEVKRALCCTLHLYQHQDPDPKKASRNV) the chain is on the cytoplasmic side.

This sequence belongs to the G-protein coupled receptor 1 family.

It is found in the cell membrane. Its function is as follows. Odorant receptor. The polypeptide is Olfactory receptor 6A2 (OR6A2) (Homo sapiens (Human)).